The primary structure comprises 420 residues: Glutamyl-tRNA reductase (420 aa).

Substrate is bound by residues 49 to 52 (TCNR), Ser109, 114 to 116 (EPQ), and Gln120. Catalysis depends on Cys50, which acts as the Nucleophile. 189–194 (GAGETI) serves as a coordination point for NADP(+).

Belongs to the glutamyl-tRNA reductase family. As to quaternary structure, homodimer.

The enzyme catalyses (S)-4-amino-5-oxopentanoate + tRNA(Glu) + NADP(+) = L-glutamyl-tRNA(Glu) + NADPH + H(+). Its pathway is porphyrin-containing compound metabolism; protoporphyrin-IX biosynthesis; 5-aminolevulinate from L-glutamyl-tRNA(Glu): step 1/2. In terms of biological role, catalyzes the NADPH-dependent reduction of glutamyl-tRNA(Glu) to glutamate 1-semialdehyde (GSA). The polypeptide is Glutamyl-tRNA reductase (Proteus mirabilis (strain HI4320)).